The following is a 454-amino-acid chain: CBL-interacting protein kinase 4 (454 aa).

In terms of domain architecture, Protein kinase spans 25-284 (YELGRMLGRG…ESLAAHHPWF (260 aa)). Residues 31–39 (LGRGTFAKV) and Lys-54 each bind ATP. The active-site Proton acceptor is Asp-151. Residues 169–198 (DFGLAALPDTLRDDGRLHTACGTPAYAAPE) form an activation loop region. One can recognise an NAF domain in the interval 311–335 (APPPPLNAFDIISMSPGLDLSGLFG). The interval 341–370 (LREKRFTTTASPEKTLEQLGLAGGKLGYVV) is PPI.

This sequence belongs to the protein kinase superfamily. CAMK Ser/Thr protein kinase family. SNF1 subfamily. It depends on Mn(2+) as a cofactor.

It catalyses the reaction L-seryl-[protein] + ATP = O-phospho-L-seryl-[protein] + ADP + H(+). The enzyme catalyses L-threonyl-[protein] + ATP = O-phospho-L-threonyl-[protein] + ADP + H(+). In terms of biological role, CIPK serine-threonine protein kinases interact with CBL proteins. Binding of a CBL protein to the regulatory NAF domain of CIPK protein lead to the activation of the kinase in a calcium-dependent manner. The chain is CBL-interacting protein kinase 4 (CIPK4) from Oryza sativa subsp. japonica (Rice).